Here is a 293-residue protein sequence, read N- to C-terminus: Histone H3-like centromeric protein CSE4 (293 aa).

Residues 132–141 (QDLSYDESDY) are compositionally biased toward acidic residues. The interval 132–169 (QDLSYDESDYSDPLQEIDSNYRESPRRTTDKILKSSSK) is disordered. Basic and acidic residues predominate over residues 150–164 (SNYRESPRRTTDKIL). Positions 157 to 291 (RRTTDKILKS…VQLARRIRGQ (135 aa)) are H3-like.

The protein belongs to the histone H3 family. As to quaternary structure, component of centromeric nucleosomes, where DNA is wrapped around a histone octamer core. The octamer contains two molecules each of H2A, H2B, CSE4/CENPA and H4 assembled in one CSE4-H4 heterotetramer and two H2A-H2B heterodimers. Interacts with the inner kinetochore. In terms of processing, ubiquitinated. Is degraded through ubiquitin-mediated proteolysis when not protected by its association to the kinetochore.

Its subcellular location is the nucleus. The protein resides in the chromosome. It is found in the centromere. Histone H3-like nucleosomal protein that is specifically found in centromeric nucleosomes. Replaces conventional H3 in the nucleosome core of centromeric chromatin that serves as an assembly site for the inner kinetochore. Required for recruitment and assembly of kinetochore proteins, mitotic progression and chromosome segregation. May serve as an epigenetic mark that propagates centromere identity through replication and cell division. This is Histone H3-like centromeric protein CSE4 (CSE4) from Monosporozyma servazzii (Yeast).